Consider the following 67-residue polypeptide: MRSKHNEMKSPIMSCSKRTEWKSILSPLIFRQQMILTQNLNQKLKTIKACMYQIRKLSKLKALYKGL.

It belongs to the rhabdoviruses C protein family.

Functionally, seems to stimulates transcription by the viral polymerase. May play a role in viral pathogenesis or transmission by insects vectors. The chain is Protein C' (P) from Vesicular stomatitis Indiana virus (strain 98COE North America) (VSIV).